Reading from the N-terminus, the 324-residue chain is Zinc finger C2HC domain-containing protein 1A (324 aa).

A C2HC/C3H-type 1 zinc finger spans residues 15 to 44 (DLLPCKICGRTFFPLALKKHGPICQKTATK). 4 residues coordinate Zn(2+): Cys19, Cys22, His34, and Cys38. Residues 43-83 (TKKRKTFDSSRQRAEGTDIPTVKPLKPRPEPPKKPSNWRRK) are disordered. A compositionally biased stretch (basic and acidic residues) spans 48–58 (TFDSSRQRAEG). The C2HC/C3H-type 2 zinc-finger motif lies at 118 to 147 (DYIQCPYCQRRFNENAADRHINFCKEQAAR). Zn(2+)-binding residues include Cys122, Cys125, His137, and Cys141. Residues 149–225 (SNKGKFSTDS…NKPQTLSPSH (77 aa)) form a disordered region. Residues 176-187 (SNPPGIPSSGSS) are compositionally biased toward low complexity. 2 stretches are compositionally biased toward polar residues: residues 188–198 (RLPQPSTTSKT) and 206–223 (KASS…TLSP). The residue at position 222 (Ser222) is a Phosphoserine. The residue at position 243 (Thr243) is a Phosphothreonine. Ser291 is subject to Phosphoserine.

It belongs to the ZC2HC1 family. Zn(2+) is required as a cofactor.

This Mus musculus (Mouse) protein is Zinc finger C2HC domain-containing protein 1A (Zc2hc1a).